The primary structure comprises 198 residues: MNIVLASSSPSRLSILRSAGVEPLVCPADVDEDALLDSLVGRSPADKVAALAQAKAEAIAGDYPDDVVIGGDSMLLLDGALQGKPHTVDKTIERWKQQRGKTAELITGHCVITPRGRHVETSTTTVTFAHADDADIEAYARTGEPLQCAGAFTLEAIGGWFIDSITGDPSSVIGLSLPVVRRALYAAGYNVSEFWNNN.

The active-site Proton acceptor is the Asp72.

Belongs to the Maf family. The cofactor is a divalent metal cation.

The protein localises to the cytoplasm. The enzyme catalyses a ribonucleoside 5'-triphosphate + H2O = a ribonucleoside 5'-phosphate + diphosphate + H(+). It carries out the reaction a 2'-deoxyribonucleoside 5'-triphosphate + H2O = a 2'-deoxyribonucleoside 5'-phosphate + diphosphate + H(+). Functionally, nucleoside triphosphate pyrophosphatase. May have a dual role in cell division arrest and in preventing the incorporation of modified nucleotides into cellular nucleic acids. The polypeptide is Nucleoside triphosphate pyrophosphatase (Corynebacterium diphtheriae (strain ATCC 700971 / NCTC 13129 / Biotype gravis)).